The chain runs to 448 residues: Metacaspase-1 (448 aa).

A disordered region spans residues 1–129 (MFPGQGRHTY…GHYSRPPTDS (129 aa)). The segment covering 10–44 (YGGQQSNYSNQQQGYDQGYNQGYGQAYGQEYNQGY) has biased composition (low complexity). Over residues 61 to 70 (SGPPPGPPPG) the composition is skewed to pro residues. The span at 99-114 (YGNNQTRGSGNEQNYG) shows a compositional bias: polar residues. Catalysis depends on residues histidine 231 and cysteine 292.

This sequence belongs to the peptidase C14B family.

Involved in cell death (apoptosis). This chain is Metacaspase-1 (MCA1), found in Candida albicans (strain SC5314 / ATCC MYA-2876) (Yeast).